The following is a 73-amino-acid chain: uncharacterized protein (73 aa).

Residues 20-49 (NATYNKNLELEKRLAKIRNEIPNKSKLIAT) adopt a coiled-coil conformation.

This is an uncharacterized protein from Acheta domesticus (House cricket).